The sequence spans 95 residues: YcgL domain-containing protein APJL_0712 (95 aa).

One can recognise a YcgL domain in the interval 4–88 (HLCAIYKSPK…PPENLLKTFL (85 aa)).

The chain is YcgL domain-containing protein APJL_0712 from Actinobacillus pleuropneumoniae serotype 3 (strain JL03).